The primary structure comprises 248 residues: Ribonuclease 3 (248 aa).

Residues 6-136 (LAYLQTLIGS…LIGAIYLDKG (131 aa)) form the RNase III domain. E49 lines the Mg(2+) pocket. D53 is a catalytic residue. D122 and E125 together coordinate Mg(2+). E125 is a catalytic residue. A DRBM domain is found at 163–231 (NYKSCLIEYS…AKEAMERIIA (69 aa)).

Belongs to the ribonuclease III family. In terms of assembly, homodimer. Requires Mg(2+) as cofactor.

The protein resides in the cytoplasm. The enzyme catalyses Endonucleolytic cleavage to 5'-phosphomonoester.. Digests double-stranded RNA. Involved in the processing of primary rRNA transcript to yield the immediate precursors to the large and small rRNAs (23S and 16S). Processes some mRNAs, and tRNAs when they are encoded in the rRNA operon. Processes pre-crRNA and tracrRNA of type II CRISPR loci if present in the organism. The sequence is that of Ribonuclease 3 from Chlorobium chlorochromatii (strain CaD3).